The following is a 309-amino-acid chain: Type II methyltransferase M.HindIII (309 aa).

Belongs to the N(4)/N(6)-methyltransferase family.

It catalyses the reaction a 2'-deoxyadenosine in DNA + S-adenosyl-L-methionine = an N(6)-methyl-2'-deoxyadenosine in DNA + S-adenosyl-L-homocysteine + H(+). A beta subtype methylase that recognizes the double-stranded sequence 5'-AAGCTT-3', methylates A-1 on both strands, and protects the DNA from cleavage by the HindIII endonuclease. The protein is Type II methyltransferase M.HindIII of Haemophilus influenzae (strain ATCC 51907 / DSM 11121 / KW20 / Rd).